The following is an 842-amino-acid chain: Protein P (842 aa).

The tract at residues 1-177 (MPLSYQHFRR…FCGSPYSWEQ (177 aa)) is terminal protein domain (TP). The spacer stretch occupies residues 178-345 (ELHHGAFLDG…YCLTHLVNLL (168 aa)). The disordered stretch occupies residues 186–273 (DGPSRMGEES…AKNIASRSAS (88 aa)). Positions 223-239 (GPQSQQRPLDGSQQGRS) are enriched in polar residues. A polymerase/reverse transcriptase domain (RT) region spans residues 346-689 (EDWGPCTEHG…YLNLYPVARQ (344 aa)). The Reverse transcriptase domain occupies 356-599 (RHHIRIPRTP…YSLNFMGYVI (244 aa)). Positions 428, 550, and 551 each coordinate Mg(2+).

This sequence belongs to the hepadnaviridae P protein family.

The enzyme catalyses DNA(n) + a 2'-deoxyribonucleoside 5'-triphosphate = DNA(n+1) + diphosphate. It catalyses the reaction Endonucleolytic cleavage to 5'-phosphomonoester.. With respect to regulation, activated by host HSP70 and HSP40 in vitro to be able to bind the epsilon loop of the pgRNA. Because deletion of the RNase H region renders the protein partly chaperone-independent, the chaperones may be needed indirectly to relieve occlusion of the RNA-binding site by this domain. Inhibited by several reverse-transcriptase inhibitors: Lamivudine, Adefovir and Entecavir. Functionally, multifunctional enzyme that converts the viral RNA genome into dsDNA in viral cytoplasmic capsids. This enzyme displays a DNA polymerase activity that can copy either DNA or RNA templates, and a ribonuclease H (RNase H) activity that cleaves the RNA strand of RNA-DNA heteroduplexes in a partially processive 3'- to 5'-endonucleasic mode. Neo-synthesized pregenomic RNA (pgRNA) are encapsidated together with the P protein, and reverse-transcribed inside the nucleocapsid. Initiation of reverse-transcription occurs first by binding the epsilon loop on the pgRNA genome, and is initiated by protein priming, thereby the 5'-end of (-)DNA is covalently linked to P protein. Partial (+)DNA is synthesized from the (-)DNA template and generates the relaxed circular DNA (RC-DNA) genome. After budding and infection, the RC-DNA migrates in the nucleus, and is converted into a plasmid-like covalently closed circular DNA (cccDNA). The activity of P protein does not seem to be necessary for cccDNA generation, and is presumably released from (+)DNA by host nuclear DNA repair machinery. This is Protein P from Homo sapiens (Human).